Here is a 68-residue protein sequence, read N- to C-terminus: Protein transport protein Sec61 subunit gamma (68 aa).

At 1–32 (MDQFQALIEPARQFSKDSYRLVKRCTKPDRKE) the chain is on the cytoplasmic side. Residues 33–61 (YQKIAMATAIGFAIMGFIGFFVKLIHIPI) form a helical membrane-spanning segment. At 62–68 (NNIIVGA) the chain is on the extracellular side.

Belongs to the SecE/SEC61-gamma family. In terms of assembly, heterotrimeric complex composed of SEC61-alpha, SEC61-beta and SEC61-gamma. As to expression, expressed in the germline. Expression in the germline is regulated in a sex- and meiotic cycle stage-specific manner. Expressed in somatic tissues including the intestine and somatic gonad. Expressed in the intestine more highly in hermaprodites than in males. In hermaphrodites, weakly expressed in the spermatheca.

The protein localises to the endoplasmic reticulum membrane. Functionally, required for oocyte development and ovulation. Required for the translocation of secretory and transmembrane proteins into the endoplasmic reticulum in vitro. The protein is Protein transport protein Sec61 subunit gamma of Caenorhabditis elegans.